We begin with the raw amino-acid sequence, 412 residues long: Polyferredoxin protein MvhB (412 aa).

4Fe-4S ferredoxin-type domains are found at residues 2–29 (IVINKEDCIRCGACQGVCPTGAISVKPE), 30–57 (DVIYCDMCGGEPKCVEACPNDALRHEDI), 66–95 (KKITYSPEKCDKCGECVKVCPPGILKLVND), 96–127 (GKASRVPLEGFCVLCQQCVNVCPIEVIGIEGV), 138–166 (DKPIYIVDCVGCGLCVPECPVNAITLPKY), 168–197 (ESIEIDEEKCIKCGICAQTCPWNSVYISGK), 207–236 (ENFTLDKEECIGCNTCVEICPGGFIEPKSD), 237–265 (LTVSLPEICPACGLCEKLCPTDAIELEVK), 275–304 (EGIVYNDENCKFCGRCALNCPNEAIRVVSP), 311–344 (GLKKVDEKESYTICTTCGACTTVCPTGALKLVEV), 356–385 (NRIQYNPSLCDKCGNCVDVCPYGILKLTDD), and 386–412 (EKLPVKGFCILCEKCIDACRFNALLIK). Residues Cys-9, Cys-12, Cys-15, and Cys-19 each coordinate [4Fe-4S] cluster. Residues Cys-75, Cys-78, Cys-81, Cys-85, Cys-107, Cys-110, Cys-113, Cys-117, Cys-146, Cys-149, Cys-152, Cys-156, Cys-177, Cys-180, Cys-183, Cys-187, Cys-216, Cys-219, Cys-222, Cys-226, Cys-245, Cys-248, Cys-251, Cys-255, Cys-284, Cys-287, Cys-290, Cys-294, Cys-324, Cys-327, Cys-330, Cys-334, Cys-365, Cys-368, Cys-371, and Cys-375 each contribute to the [4Fe-4S] cluster site.

It depends on [4Fe-4S] cluster as a cofactor.

In Methanothermus fervidus, this protein is Polyferredoxin protein MvhB (mvhB).